A 236-amino-acid chain; its full sequence is Small ribosomal subunit protein uS2c (236 aa).

It belongs to the universal ribosomal protein uS2 family.

The protein resides in the plastid. The protein localises to the chloroplast. This is Small ribosomal subunit protein uS2c (rps2) from Lotus japonicus (Lotus corniculatus var. japonicus).